The following is a 229-amino-acid chain: ATP-dependent dethiobiotin synthetase BioD (229 aa).

15–20 (EIGKTL) contacts ATP. Threonine 19 contributes to the Mg(2+) binding site. Lysine 40 is a catalytic residue. ATP contacts are provided by residues aspartate 57, 118–121 (EGVG), and 207–209 (PRL). Residues aspartate 57 and glutamate 118 each coordinate Mg(2+).

The protein belongs to the dethiobiotin synthetase family. Homodimer. The cofactor is Mg(2+).

The protein resides in the cytoplasm. The catalysed reaction is (7R,8S)-7,8-diammoniononanoate + CO2 + ATP = (4R,5S)-dethiobiotin + ADP + phosphate + 3 H(+). Its pathway is cofactor biosynthesis; biotin biosynthesis; biotin from 7,8-diaminononanoate: step 1/2. In terms of biological role, catalyzes a mechanistically unusual reaction, the ATP-dependent insertion of CO2 between the N7 and N8 nitrogen atoms of 7,8-diaminopelargonic acid (DAPA, also called 7,8-diammoniononanoate) to form a ureido ring. The protein is ATP-dependent dethiobiotin synthetase BioD of Ralstonia nicotianae (strain ATCC BAA-1114 / GMI1000) (Ralstonia solanacearum).